Here is a 96-residue protein sequence, read N- to C-terminus: UPF0184 protein CG14818 (96 aa).

Disordered stretches follow at residues 1–28 (MSPKNNHDPSSSGDSGNTNVQEADLQEM) and 70–96 (IAEENDNAPESGDDNMDGQAGSEAAPK). Residues 8 to 21 (DPSSSGDSGNTNVQ) are compositionally biased toward polar residues. The stretch at 21–77 (QEADLQEMEDVNNSLDALSCALDAVEQRTDDIMSQLRELLNSNREIRRLIAEENDNA) forms a coiled coil. Residues 72 to 85 (EENDNAPESGDDNM) are compositionally biased toward acidic residues.

It belongs to the UPF0184 (EST00098) family.

This chain is UPF0184 protein CG14818, found in Drosophila melanogaster (Fruit fly).